Here is a 323-residue protein sequence, read N- to C-terminus: tRNA dimethylallyltransferase (323 aa).

Position 12-19 (12-19 (GPTAAGKT)) interacts with ATP. Residue 14–19 (TAAGKT) participates in substrate binding. Interaction with substrate tRNA stretches follow at residues 37 to 40 (DSAL) and 161 to 165 (QRLIR).

The protein belongs to the IPP transferase family. As to quaternary structure, monomer. The cofactor is Mg(2+).

The catalysed reaction is adenosine(37) in tRNA + dimethylallyl diphosphate = N(6)-dimethylallyladenosine(37) in tRNA + diphosphate. Its function is as follows. Catalyzes the transfer of a dimethylallyl group onto the adenine at position 37 in tRNAs that read codons beginning with uridine, leading to the formation of N6-(dimethylallyl)adenosine (i(6)A). This Pseudomonas putida (strain W619) protein is tRNA dimethylallyltransferase.